The primary structure comprises 275 residues: Protein MGF 110-11L (275 aa).

A helical membrane pass occupies residues 5 to 25 (LGLLLGYSVLILTHELPDLSA). An N-linked (GlcNAc...) asparagine; by host glycan is attached at Asn61. A run of 2 helical transmembrane segments spans residues 127–147 (HCCF…FAYH) and 149–169 (NLHL…IWLS).

The protein belongs to the asfivirus MGF 110 family.

The protein resides in the host membrane. In terms of biological role, plays a role in virus cell tropism, and may be required for efficient virus replication in macrophages. This is Protein MGF 110-11L from African swine fever virus (isolate Pig/Kenya/KEN-50/1950) (ASFV).